Reading from the N-terminus, the 160-residue chain is Keratin-associated protein 13-4 (160 aa).

A run of 4 repeats spans residues 41 to 50 (CQLRSSLYRD), 51 to 60 (CQKTCWEPAS), 61 to 70 (CQKSCYRPRT), and 77 to 86 (CQTTCSGSLG). Residues 41–86 (CQLRSSLYRDCQKTCWEPASCQKSCYRPRTSILCCPCQTTCSGSLG) are 4 X 10 AA approximate repeats.

It belongs to the PMG family. In terms of assembly, interacts with hair keratins.

Its function is as follows. In the hair cortex, hair keratin intermediate filaments are embedded in an interfilamentous matrix, consisting of hair keratin-associated proteins (KRTAP), which are essential for the formation of a rigid and resistant hair shaft through their extensive disulfide bond cross-linking with abundant cysteine residues of hair keratins. The matrix proteins include the high-sulfur and high-glycine-tyrosine keratins. The protein is Keratin-associated protein 13-4 (KRTAP13-4) of Homo sapiens (Human).